Consider the following 305-residue polypeptide: D-alanine--D-alanine ligase (305 aa).

Positions 107–299 constitute an ATP-grasp domain; it reads KVIFASAGLK…FGELVLRILQ (193 aa). 134 to 185 serves as a coordination point for ATP; that stretch reads PLPVVVKPSREGSSVGVGIVRDPSRMQAALDEAFRYDSEILIEGFIDGREVQ. Mg(2+)-binding residues include aspartate 253, glutamate 266, and asparagine 268.

This sequence belongs to the D-alanine--D-alanine ligase family. Mg(2+) is required as a cofactor. The cofactor is Mn(2+).

The protein resides in the cytoplasm. It catalyses the reaction 2 D-alanine + ATP = D-alanyl-D-alanine + ADP + phosphate + H(+). It participates in cell wall biogenesis; peptidoglycan biosynthesis. In terms of biological role, cell wall formation. The sequence is that of D-alanine--D-alanine ligase from Citrifermentans bemidjiense (strain ATCC BAA-1014 / DSM 16622 / JCM 12645 / Bem) (Geobacter bemidjiensis).